Here is a 384-residue protein sequence, read N- to C-terminus: Thylakoid membrane protein TERC, chloroplastic (384 aa).

The transit peptide at 1–48 (MSLASVIHHGILPPAKSDRIFLTIPVFPPDFRARGWTKSPFSLLINPS) directs the protein to the chloroplast. At 49–115 (LASAANRRLS…DYQQEETYKT (67 aa)) the chain is on the stromal side. A disordered region spans residues 68-104 (GIDQEDEEKESRELLPHKNDENATTSRSSSSVDSGGL). Over residues 76–88 (KESRELLPHKNDE) the composition is skewed to basic and acidic residues. The chain crosses the membrane as a helical span at residues 116–136 (SFKTVALCVGTAVAFGIGIGL). Topologically, residues 137–145 (KEGVGKASE) are lumenal, thylakoid. A helical membrane pass occupies residues 146–166 (FFAGYILEQSLSVDNLFVFVL). At 167-180 (VFKYFKVPLMYQNK) the chain is on the stromal side. The chain crosses the membrane as a helical span at residues 181–201 (VLTYGIAGAIVFRFTLILLGT). The Lumenal, thylakoid segment spans residues 202 to 206 (ATLQK). Residues 207–227 (FEAVNLLLAAVLLYSSFKLFA) form a helical membrane-spanning segment. The Stromal segment spans residues 228-275 (SEEDDTDLSDNFIVKTCQRFIPVTSSYDGNRFFTKHDGILKATPLLLT). The chain crosses the membrane as a helical span at residues 276–296 (VAVIELSDIAFAVDSIPAVFG). The Lumenal, thylakoid portion of the chain corresponds to 297 to 301 (VTRDP). The chain crosses the membrane as a helical span at residues 302 to 322 (FIVLTSNLFAILGLRSLYTLI). Residues 323–335 (SEGMDELEYLQPS) are Stromal-facing. Residues 336-356 (IAVVLGFIGVKMILDFFGFHI) form a helical membrane-spanning segment. Position 357 (S357) is a topological domain, lumenal, thylakoid. A helical membrane pass occupies residues 358-378 (TEASLGVVALSLSTGVLLSLT). At 379–384 (NKSSDS) the chain is on the stromal side.

In terms of assembly, interacts with ALB3. As to expression, expressed in roots, rosette and cauline leaves, stems and flowers.

It localises to the plastid. It is found in the chloroplast thylakoid membrane. In terms of biological role, integral thylakoid membrane protein that plays a crucial role in thylakoid membrane biogenesis and thylakoid formation in early chloroplast development. Is essential for de novo synthesis of photosystem II (PSII) core proteins and required for efficient insertion of thylakoid membrane proteins, presumably via interaction with ALB3. May assist synthesis of thylakoid membrane proteins at the membrane insertion step. The protein is Thylakoid membrane protein TERC, chloroplastic of Arabidopsis thaliana (Mouse-ear cress).